The chain runs to 452 residues: Methionine aminopeptidase 2 (452 aa).

Residues 1–96 (MAVQALPEIN…VPLSTLFPNN (96 aa)) form a disordered region. Over residues 18 to 35 (GAANAAAKGQAAQGTAGN) the composition is skewed to low complexity. The segment covering 36 to 53 (DDAENDESDEDKEDEQEV) has biased composition (acidic residues). Positions 62-77 (GKKKKKKTKKKKKKGT) are enriched in basic residues. His-202 is a binding site for substrate. 3 residues coordinate a divalent metal cation: Asp-222, Asp-233, and His-302. Residue His-310 coordinates substrate. A divalent metal cation-binding residues include Glu-338 and Glu-433.

Belongs to the peptidase M24A family. Methionine aminopeptidase eukaryotic type 2 subfamily. The cofactor is Co(2+). It depends on Zn(2+) as a cofactor. Mn(2+) serves as cofactor. Requires Fe(2+) as cofactor.

The protein resides in the cytoplasm. The enzyme catalyses Release of N-terminal amino acids, preferentially methionine, from peptides and arylamides.. Cotranslationally removes the N-terminal methionine from nascent proteins. The N-terminal methionine is often cleaved when the second residue in the primary sequence is small and uncharged (Met-Ala-, Cys, Gly, Pro, Ser, Thr, or Val). This is Methionine aminopeptidase 2 from Coccidioides posadasii (strain C735) (Valley fever fungus).